The chain runs to 511 residues: Ribose import ATP-binding protein RbsA 3 (511 aa).

ABC transporter domains are found at residues 21–257 (LEMR…VGRD) and 256–511 (RDVE…TGNA). 53 to 60 (GENGAGKS) provides a ligand contact to ATP.

It belongs to the ABC transporter superfamily. Ribose importer (TC 3.A.1.2.1) family. In terms of assembly, the complex is composed of an ATP-binding protein (RbsA), two transmembrane proteins (RbsC) and a solute-binding protein (RbsB).

Its subcellular location is the cell inner membrane. The enzyme catalyses D-ribose(out) + ATP + H2O = D-ribose(in) + ADP + phosphate + H(+). Part of the ABC transporter complex RbsABC involved in ribose import. Responsible for energy coupling to the transport system. The polypeptide is Ribose import ATP-binding protein RbsA 3 (Rhizobium etli (strain ATCC 51251 / DSM 11541 / JCM 21823 / NBRC 15573 / CFN 42)).